Reading from the N-terminus, the 288-residue chain is Acetylglutamate kinase (288 aa).

Substrate-binding positions include 66-67 (GG), Arg-88, and Asn-182.

The protein belongs to the acetylglutamate kinase family. ArgB subfamily.

The protein resides in the cytoplasm. It catalyses the reaction N-acetyl-L-glutamate + ATP = N-acetyl-L-glutamyl 5-phosphate + ADP. The protein operates within amino-acid biosynthesis; L-arginine biosynthesis; N(2)-acetyl-L-ornithine from L-glutamate: step 2/4. Catalyzes the ATP-dependent phosphorylation of N-acetyl-L-glutamate. The polypeptide is Acetylglutamate kinase (Brachyspira hyodysenteriae (strain ATCC 49526 / WA1)).